A 177-amino-acid polypeptide reads, in one-letter code: Gamma-crystallin M1-2 (177 aa).

2 consecutive Beta/gamma crystallin 'Greek key' domains span residues 2 to 40 (GKII…RVEN) and 41 to 83 (GCWM…RLLS). The connecting peptide stretch occupies residues 84–90 (QNLGIGT). Beta/gamma crystallin 'Greek key' domains are found at residues 91 to 131 (NKLR…NVLD) and 132 to 174 (GYWI…RRVI).

Belongs to the beta/gamma-crystallin family. As to quaternary structure, monomer.

In terms of biological role, crystallins are the dominant structural components of the vertebrate eye lens. This is Gamma-crystallin M1-2 from Aquarana catesbeiana (American bullfrog).